The primary structure comprises 340 residues: 7,8-didemethyl-8-hydroxy-5-deazariboflavin synthase (340 aa).

The Radical SAM core domain occupies 25–256; sequence ATYSPAYTIV…SDITIQIPPN (232 aa). [4Fe-4S] cluster is bound by residues C39, C43, and C46.

Belongs to the radical SAM superfamily. CofG family. In terms of assembly, consists of two subunits, CofG and CofH. Requires [4Fe-4S] cluster as cofactor.

The enzyme catalyses 5-amino-5-(4-hydroxybenzyl)-6-(D-ribitylimino)-5,6-dihydrouracil + S-adenosyl-L-methionine = 7,8-didemethyl-8-hydroxy-5-deazariboflavin + 5'-deoxyadenosine + L-methionine + NH4(+) + H(+). Its pathway is cofactor biosynthesis; coenzyme F0 biosynthesis. In terms of biological role, catalyzes the radical-mediated synthesis of 7,8-didemethyl-8-hydroxy-5-deazariboflavin from 5-amino-5-(4-hydroxybenzyl)-6-(D-ribitylimino)-5,6-dihydrouracil. This chain is 7,8-didemethyl-8-hydroxy-5-deazariboflavin synthase, found in Trichormus variabilis (strain ATCC 29413 / PCC 7937) (Anabaena variabilis).